A 620-amino-acid chain; its full sequence is MGKVIGIDLGTTNSAMAVYEGNEAKIIANKEGKNTTPSIVAFTDKGEILVGESAKRQAVTNPEKTIYSIKRIMGLMFNEDKAKEAEKRLPYKIVDRNGACAIEISGKVYTPQEISAKILMKLKEDAESYLGESVTEAVITVPAYFNDSQRKATKEAGTIAGLNVLRIINEPTSAALAYGLDKKESEKIMVYDLGGGTFDVTVLETGDNVVEVLATGGDAFLGGDDFDNRVIDFLASEFKSETGIEIKNDVMALQRLKEAAENAKKELSSAMETEINLPFITADATGPKHLVKKLTRAKFESLTEDLMEETISKIESVIKDAGLTKNEISEVVMVGGSTRIPKVQERVKAFINKELNKSVNPDEVVAVGASIQGGVLKGDVKDVLLLDVTPLSLGIETLGGVMTKVIDRGTTIPAKKSQVFSTAEDNQPAVSIMVLQGERELARDNKSLGKFDLQGIAPAPRGVPQIEVTFDIDANGILTVSAQDKNTGKSQEIKISGSSGLSDSEIEKMVKDAELHKEEDARKKEVIEARNHADSLAHQTQKSLDEHKTNLNENDANEIQNAINALKDCIKNDNATKAELEDKTKALAQAAQKLGEAMANKNNAEQPKKKDDDVIDAEVE.

Threonine 197 carries the phosphothreonine; by autocatalysis modification. The interval 591–620 (AQKLGEAMANKNNAEQPKKKDDDVIDAEVE) is disordered.

Belongs to the heat shock protein 70 family.

In terms of biological role, acts as a chaperone. This chain is Chaperone protein DnaK, found in Helicobacter pylori (strain HPAG1).